We begin with the raw amino-acid sequence, 119 residues long: MKRVAFVFTHSPHGSTSGREGLDALLAMSALTEEIGVFFVGDGVLQLLPHQQPEKILMRNYIATFGVLPLYDIECCYLCEASVRQRGLSIDTNWVLDVELLAPKAWRSKLADYHSILSF.

It belongs to the DsrF/TusC family. Heterohexamer, formed by a dimer of trimers. The hexameric TusBCD complex contains 2 copies each of TusB, TusC and TusD. The TusBCD complex interacts with TusE.

Its subcellular location is the cytoplasm. Its function is as follows. Part of a sulfur-relay system required for 2-thiolation of 5-methylaminomethyl-2-thiouridine (mnm(5)s(2)U) at tRNA wobble positions. The polypeptide is Protein TusC (Pectobacterium atrosepticum (strain SCRI 1043 / ATCC BAA-672) (Erwinia carotovora subsp. atroseptica)).